A 327-amino-acid chain; its full sequence is 2-methoxy-6-polyprenyl-1,4-benzoquinol methylase, mitochondrial (327 aa).

The N-terminal 49 residues, 1–49, are a transit peptide targeting the mitochondrion; it reads MAAPRSCALWSYCGRGWSWAMRGCQLLGLRSSWPGAPLSARLLPQEKRA. S-adenosyl-L-methionine is bound by residues Thr-117, Asp-171, and 199–200; that span reads DA.

It belongs to the class I-like SAM-binding methyltransferase superfamily. MenG/UbiE family. Component of a multi-subunit COQ enzyme complex, composed of at least COQ3, COQ4, COQ5, COQ6, COQ7 and COQ9. Interacts with PYURF; the interaction is direct, stabilizes COQ5 protein and associates PYURF with COQ enzyme complex.

The protein resides in the mitochondrion inner membrane. It catalyses the reaction 2-methoxy-6-(all-trans-decaprenyl)benzene-1,4-diol + S-adenosyl-L-methionine = 5-methoxy-2-methyl-3-(all-trans-decaprenyl)benzene-1,4-diol + S-adenosyl-L-homocysteine + H(+). It functions in the pathway cofactor biosynthesis; ubiquinone biosynthesis. Methyltransferase required for the conversion of 2-decaprenyl-6-methoxy-1,4-benzoquinol (DDMQH2) to 2-decaprenyl-3-methyl-6-methoxy-1,4-benzoquinol (DMQH2). The polypeptide is 2-methoxy-6-polyprenyl-1,4-benzoquinol methylase, mitochondrial (Pongo abelii (Sumatran orangutan)).